The chain runs to 1258 residues: Structural polyprotein (1258 aa).

A host transcription inhibition region spans residues 41–75 (PQAQQMQQLIAAVNTLAIRQNGTRTPGQQRRKRQP). The interval 59-114 (RQNGTRTPGQQRRKRQPNKPKRKQTPPKKQNPAKTKNKQKPQPPKPKKRKPGKRER) is disordered. Positions 68-109 (QQRRKRQPNKPKRKQTPPKKQNPAKTKNKQKPQPPKPKKRKP) match the Nuclear localization signal motif. Basic residues-rich tracts occupy residues 69 to 84 (QRRKRQPNKPKRKQTP) and 93 to 114 (TKNKQKPQPPKPKKRKPGKRER). The tract at residues 96-124 (KQKPQPPKPKKRKPGKRERKCMKIENDCI) is binding to the viral RNA. Positions 109–123 (PGKRERKCMKIENDC) are ribosome-binding. Cysteines 123 and 138 form a disulfide. The Peptidase S3 domain maps to 123–271 (CIFEVKLEGK…RITPEGTEEW (149 aa)). His149 (charge relay system) is an active-site residue. Residues 154–164 (IDNPDLAKLAF) carry the Nuclear export signal motif. An interaction with spike glycoprotein E2 region spans residues 165–170 (KKSSKY). Asp171 serves as the catalytic Charge relay system. Residues 193–203 (PEGHYNWHHGA) form a dimerization of the capsid protein region. Residue Ser223 is the Charge relay system of the active site. The interval 229-233 (DNKGR) is dimerization of the capsid protein. The interval 272–284 (TALVTTACILSNL) is functions as an uncleaved signal peptide for the precursor of protein E3/E2. 9 cysteine pairs are disulfide-bonded: Cys279–Cys288, Cys293–Cys297, Cys296–Cys328, Cys356–Cys462, Cys359–Cys365, Cys428–Cys442, Cys490–Cys601, Cys538–Cys562, and Cys540–Cys557. N-linked (GlcNAc...) asparagine; by host glycosylation is present at Asn283. Residues 338-696 (GLTEDYKAYK…PHEIFSYYYG (359 aa)) are Extracellular-facing. 2 interaction with host Mxra8 receptor regions span residues 363–366 (QFCY) and 399–401 (HSW). The segment at 521–524 (TGNK) is interaction with host Mxra8 receptor. N-linked (GlcNAc...) asparagine; by host glycosylation occurs at Asn537. An interaction with host Mxra8 receptor region spans residues 553-559 (EFDNCEV). An N-linked (GlcNAc...) asparagine; by host glycan is attached at Asn598. A helical transmembrane segment spans residues 697–717 (LYPATTVAVCVGLACVILLAL). Residues 718 to 758 (SASCCLCVSARNKCLTPYALTPGAVVPCTLSLLCCAPRAKA) are Cytoplasmic-facing. The interval 726 to 730 (SARNK) is interaction with the capsid protein. S-palmitoyl cysteine; by host attachment occurs at residues Cys731, Cys751, and Cys752. Residues 731–751 (CLTPYALTPGAVVPCTLSLLC) are transient transmembrane before p62-6K protein processing. A disulfide bond links Cys731 and Cys752. The Extracellular portion of the chain corresponds to 759 to 773 (ATFAETAAYLWAENQ). The helical transmembrane segment at 774-794 (TVFWMQFAIPVACFMIVTYCL) threads the bilayer. Topologically, residues 795–796 (RH) are cytoplasmic. The chain crosses the membrane as a helical span at residues 797–817 (LMLCCRTASFLVAVSLGMGAT). Extracellular loops occupy residues 818–819 (QA) and 820–1234 (YEHS…HTMG). Intrachain disulfides connect Cys868-Cys933, Cys881-Cys913, Cys882-Cys915, and Cys887-Cys897. The E1 fusion peptide loop stretch occupies residues 903-920 (VYPFLWGGAYCFCDSENT). N-linked (GlcNAc...) asparagine; by host glycosylation is found at Asn960 and Asn1089. 4 disulfides stabilise this stretch: Cys1078-Cys1090, Cys1120-Cys1195, Cys1125-Cys1199, and Cys1147-Cys1189. A helical transmembrane segment spans residues 1235–1255 (GATVVIAIGITIFLIVTCIAF). Cys1252 is lipidated: S-palmitoyl cysteine; by host. The Cytoplasmic segment spans residues 1256 to 1258 (SRH).

In terms of assembly, homodimer. Homomultimer. Interacts with host karyopherin KPNA4; this interaction allows the nuclear import of the viral capsid protein. Interacts with spike glycoprotein E2. Interacts with host IRAK1; the interaction leads to inhibition of IRAK1-dependent signaling. The precursor of protein E3/E2 and E1 form a heterodimer shortly after synthesis. As to quaternary structure, the precursor of protein E3/E2 and E1 form a heterodimer shortly after synthesis. Processing of the precursor of protein E3/E2 into E2 and E3 results in a heterodimer of the spike glycoproteins E2 and E1. Spike at virion surface are constituted of a trimer of E2-E1 heterodimers. After target cell attachment and endocytosis, E1 change conformation to form homotrimers. Interacts with 6K protein. In terms of assembly, interacts with spike glycoprotein E1. Processing of the precursor of protein E3/E2 into E2 and E3 results in a heterodimer of the spike glycoproteins E2 and E1. Spike at virion surface are constituted of a trimer of E2-E1 heterodimers. Interacts with 6K protein. Interacts with host MXRA8; this interaction mediates virus entry. Oligomer. Interacts with spike glycoprotein E1. Interacts with spike glycoprotein E2. Post-translationally, structural polyprotein: Specific enzymatic cleavages in vivo yield mature proteins. Capsid protein is auto-cleaved during polyprotein translation, unmasking a signal peptide at the N-terminus of the precursor of E3/E2. The remaining polyprotein is then targeted to the host endoplasmic reticulum, where host signal peptidase cleaves it into pE2, 6K and E1 proteins. pE2 is further processed to mature E3 and E2 by host furin in trans-Golgi vesicle. Palmitoylated via thioester bonds. These palmitoylations may induce disruption of the C-terminus transmembrane. This would result in the reorientation of E2 C-terminus from lumenal to cytoplasmic side. In terms of processing, N-glycosylated. Post-translationally, palmitoylated via thioester bonds.

Its subcellular location is the virion. It localises to the host cytoplasm. It is found in the host cell membrane. The protein localises to the host nucleus. The protein resides in the virion membrane. Its subcellular location is the host Golgi apparatus. It localises to the host trans-Golgi network. It is found in the host endoplasmic reticulum. The catalysed reaction is Autocatalytic release of the core protein from the N-terminus of the togavirus structural polyprotein by hydrolysis of a -Trp-|-Ser- bond.. Its function is as follows. Forms an icosahedral capsid with a T=4 symmetry composed of 240 copies of the capsid protein surrounded by a lipid membrane through which penetrate 80 spikes composed of trimers of E1-E2 heterodimers. The capsid protein binds to the viral RNA genome at a site adjacent to a ribosome binding site for viral genome translation following genome release. Possesses a protease activity that results in its autocatalytic cleavage from the nascent structural protein. Following its self-cleavage, the capsid protein transiently associates with ribosomes, and within several minutes the protein binds to viral RNA and rapidly assembles into icosahedric core particles. The resulting nucleocapsid eventually associates with the cytoplasmic domain of the spike glycoprotein E2 at the cell membrane, leading to budding and formation of mature virions. In case of infection, new virions attach to target cells and after clathrin-mediated endocytosis their membrane fuses with the host endosomal membrane. This leads to the release of the nucleocapsid into the cytoplasm, followed by an uncoating event necessary for the genomic RNA to become accessible. The uncoating might be triggered by the interaction of capsid proteins with ribosomes. Binding of ribosomes would release the genomic RNA since the same region is genomic RNA-binding and ribosome-binding. Specifically inhibits interleukin-1 receptor-associated kinase 1/IRAK1-dependent signaling during viral entry, representing a means by which the alphaviruses may evade innate immune detection and activation prior to viral gene expression. Functionally, provides the signal sequence for the translocation of the precursor of protein E3/E2 to the host endoplasmic reticulum. Furin-cleaved E3 remains associated with spike glycoprotein E1 and mediates pH protection of the latter during the transport via the secretory pathway. After virion release from the host cell, the assembly protein E3 is gradually released in the extracellular space. Plays a role in viral attachment to target host cell, by binding to the cell receptor MXRA8. Synthesized as a p62 precursor which is processed by furin at the cell membrane just before virion budding, giving rise to E2-E1 heterodimer. The p62-E1 heterodimer is stable, whereas E2-E1 is unstable and dissociate at low pH. p62 is processed at the last step, presumably to avoid E1 fusion activation before its final export to cell surface. E2 C-terminus contains a transitory transmembrane that would be disrupted by palmitoylation, resulting in reorientation of the C-terminal tail from lumenal to cytoplasmic side. This step is critical since E2 C-terminus is involved in budding by interacting with capsid proteins. This release of E2 C-terminus in cytoplasm occurs lately in protein export, and precludes premature assembly of particles at the endoplasmic reticulum membrane. In terms of biological role, acts as a viroporin that participates in virus glycoprotein processing and transport to the plasma membrane, cell permeabilization and budding of viral particles. Disrupts the calcium homeostasis of the cell, probably at the endoplasmic reticulum level. This leads to cytoplasmic calcium elevation. Because of its lipophilic properties, the 6K protein is postulated to influence the selection of lipids that interact with the transmembrane domains of the glycoproteins, which, in turn, affects the deformability of the bilayer required for the extreme curvature that occurs as budding proceeds. Present in low amount in virions, about 3% compared to viral glycoproteins. Its function is as follows. Class II viral fusion protein. Fusion activity is inactive as long as E1 is bound to E2 in mature virion. After virus attachment to target cell and endocytosis, acidification of the endosome induce dissociation of E1/E2 heterodimer and concomitant trimerization of the E1 subunits. This E1 trimer is fusion active, and promotes release of viral nucleocapsid in cytoplasm after endosome and viral membrane fusion. Efficient fusion requires the presence of cholesterol and sphingolipid in the target membrane. This chain is Structural polyprotein, found in Middelburg virus.